Consider the following 110-residue polypeptide: U1-lycotoxin-Ls1hh (110 aa).

The first 20 residues, 1–20, serve as a signal peptide directing secretion; it reads MKFVLLFGVLLVTLFSYSSA. Residues 21–44 constitute a propeptide that is removed on maturation; sequence EMLDDFDQADEDELLSLIEKEEAR. Cystine bridges form between cysteine 47-cysteine 62, cysteine 54-cysteine 71, cysteine 61-cysteine 89, and cysteine 73-cysteine 87.

The protein belongs to the neurotoxin 19 (CSTX) family. 03 subfamily. As to expression, expressed by the venom gland.

It is found in the secreted. The polypeptide is U1-lycotoxin-Ls1hh (Lycosa singoriensis (Wolf spider)).